A 505-amino-acid chain; its full sequence is Maturase K (505 aa).

The protein belongs to the intron maturase 2 family. MatK subfamily.

Its subcellular location is the plastid. The protein resides in the chloroplast. Usually encoded in the trnK tRNA gene intron. Probably assists in splicing its own and other chloroplast group II introns. The chain is Maturase K from Dioon edule (Virgin's palm).